We begin with the raw amino-acid sequence, 432 residues long: Peptidase B (432 aa).

Mn(2+)-binding residues include lysine 196 and aspartate 201. Lysine 208 is a catalytic residue. Aspartate 219, aspartate 278, and glutamate 280 together coordinate Mn(2+). Arginine 282 is an active-site residue.

Belongs to the peptidase M17 family. In terms of assembly, homohexamer. The cofactor is Mn(2+).

Its subcellular location is the cytoplasm. The catalysed reaction is Release of an N-terminal amino acid, Xaa, from a peptide or arylamide. Xaa is preferably Glu or Asp but may be other amino acids, including Leu, Met, His, Cys and Gln.. Its function is as follows. Probably plays an important role in intracellular peptide degradation. The protein is Peptidase B of Vibrio vulnificus (strain CMCP6).